Consider the following 132-residue polypeptide: Histone H2B.2 (132 aa).

The segment covering 1 to 19 has biased composition (basic and acidic residues); it reads MAPKAEKKPASKAPAEKKP. Positions 1–39 are disordered; it reads MAPKAEKKPASKAPAEKKPAAKKTSSSVDPSKKRTKARK. An N6-acetyllysine; alternate mark is found at lysine 7 and lysine 8. Residues lysine 7 and lysine 8 each participate in a glycyl lysine isopeptide (Lys-Gly) (interchain with G-Cter in SUMO); alternate cross-link. Residue serine 11 is modified to Phosphoserine. Lysine 12 is modified (N6-acetyllysine). N6-acetyllysine; alternate is present on lysine 17. A Glycyl lysine isopeptide (Lys-Gly) (interchain with G-Cter in SUMO); alternate cross-link involves residue lysine 17. Lysine 18 participates in a covalent cross-link: Glycyl lysine isopeptide (Lys-Gly) (interchain with G-Cter in SUMO). Residue lysine 125 forms a Glycyl lysine isopeptide (Lys-Gly) (interchain with G-Cter in ubiquitin) linkage.

This sequence belongs to the histone H2B family. In terms of assembly, the nucleosome is a histone octamer containing two molecules each of H2A, H2B, H3 and H4 assembled in one H3-H4 heterotetramer and two H2A-H2B heterodimers. The octamer wraps approximately 147 bp of DNA. Post-translationally, monoubiquitinated by the UBC2-BRE1 complex to form H2BK123ub1. H2BK123ub1 gives a specific tag for epigenetic transcriptional activation and is also prerequisite for H3K4me and H3K79me formation. H2BK123ub1 also modulates the formation of double-strand breaks during meiosis and is a prerequisite for DNA-damage checkpoint activation. Phosphorylated by STE20 to form H2BS10ph during progression through meiotic prophase. May be correlated with chromosome condensation. In terms of processing, acetylated by GCN5 to form H2BK11ac and H2BK16ac. H2BK16ac can also be formed by ESA1. Acetylation of N-terminal lysines and particularly formation of H2BK11acK16ac has a positive effect on transcription. Post-translationally, sumoylation to form H2BK6su or H2BK7su, and probably also H2BK16su or H2BK17su, occurs preferentially near the telomeres and represses gene transcription.

The protein resides in the nucleus. It localises to the chromosome. Functionally, core component of nucleosome. Nucleosomes wrap and compact DNA into chromatin, limiting DNA accessibility to the cellular machineries which require DNA as a template. Histones thereby play a central role in transcription regulation, DNA repair, DNA replication and chromosomal stability. DNA accessibility is regulated via a complex set of post-translational modifications of histones, also called histone code, and nucleosome remodeling. This chain is Histone H2B.2 (HTB1), found in Kluyveromyces lactis (strain ATCC 8585 / CBS 2359 / DSM 70799 / NBRC 1267 / NRRL Y-1140 / WM37) (Yeast).